The following is a 666-amino-acid chain: Transmembrane protein 201 (666 aa).

Met-1 bears the N-acetylmethionine mark. Over 1–213 (MEGVSALLAR…FSSAVKSPVQ (213 aa)) the chain is Nuclear. The chain crosses the membrane as a helical span at residues 214–234 (VILLRALAFLACAFLLTTALY). The Perinuclear space segment spans residues 235-297 (GASGHFAPGT…EAWAFGQSHQ (63 aa)). A helical transmembrane segment spans residues 298–318 (TGVVALGLLTCLLAMLLAGRI). Topologically, residues 319 to 322 (RLRR) are nuclear. Residues 323 to 343 (IDAFCTCLWALLLGLHLAEQH) traverse the membrane as a helical segment. At 344–356 (LQAASPSWLDTLK) the chain is on the perinuclear space side. Residues 357-374 (FSTTSLCCLVGFTAAVAT) traverse the membrane as a helical segment. The Nuclear segment spans residues 375 to 644 (RKATGPRRFR…GRFGPSLVRG (270 aa)). A phosphoserine mark is found at Ser-441, Ser-444, Ser-450, Ser-454, Ser-466, Ser-477, and Ser-480. The interval 502 to 581 (PLPSPAPSVA…PPHVPRKPPL (80 aa)) is disordered. Residues 508–520 (PSVAGSVASSSGS) show a composition bias toward low complexity. Phosphoserine is present on Ser-529. The helical transmembrane segment at 645–665 (LLAVSLAANALFTSVFLYQSL) threads the bilayer. A topological domain (perinuclear space) is located at residue Arg-666.

The protein belongs to the TMEM201 family. In terms of assembly, interacts with SUN2 and LMNA. May bind to Ran GTPase; has a greater affinity for Ran-GTP over Ran-GDP. As to quaternary structure, interacts with EMD.

The protein resides in the nucleus inner membrane. It is found in the cytoplasm. The protein localises to the cytoskeleton. It localises to the spindle pole. In terms of biological role, critical regulator of angiogenesis and endothelial cell (EC) migration. Promotes the migration of endothelial cells, which is essential for angiogenesis. Interacts with the linker of nucleoskeleton and cytoskeleton (LINC) complex, which plays a vital role in connecting the cell's cytoskeleton to the nuclear envelope. This interaction is essential for maintaining cellular structure and facilitating the movement of endothelial cells, which is critical for proper vascular development. Involved in nuclear movement during fibroblast polarization and migration. Overexpression can recruit Ran GTPase to the nuclear periphery. Its function is as follows. May define a distinct membrane domain in the vicinity of the mitotic spindle. Involved in the organization of the nuclear envelope implicating EMD, SUN1 and A-type lamina. The sequence is that of Transmembrane protein 201 (TMEM201) from Homo sapiens (Human).